A 168-amino-acid chain; its full sequence is Peptidoglycan-associated lipoprotein (168 aa).

Positions 1–24 (MRRIQSIARSPIAIALFMSLAVAG) are cleaved as a signal peptide. Cys25 carries the N-palmitoyl cysteine lipid modification. Cys25 carries S-diacylglycerol cysteine lipidation. The OmpA-like domain maps to 51 to 167 (QDFTVNVGDR…RAVTVLNGAG (117 aa)).

Belongs to the Pal lipoprotein family. The Tol-Pal system is composed of five core proteins: the inner membrane proteins TolA, TolQ and TolR, the periplasmic protein TolB and the outer membrane protein Pal. They form a network linking the inner and outer membranes and the peptidoglycan layer. In terms of processing, the N-terminus is blocked.

It localises to the cell outer membrane. Part of the Tol-Pal system, which plays a role in outer membrane invagination during cell division and is important for maintaining outer membrane integrity. The sequence is that of Peptidoglycan-associated lipoprotein from Brucella abortus biovar 1 (strain 9-941).